The primary structure comprises 466 residues: Glutamate--tRNA ligase 1 (466 aa).

Positions 9–19 match the 'HIGH' region motif; the sequence is PSPTGMLHIGG. The 'KMSKS' region motif lies at 238–242; the sequence is KLSKR. ATP is bound at residue Lys-241.

It belongs to the class-I aminoacyl-tRNA synthetase family. Glutamate--tRNA ligase type 1 subfamily. Monomer.

The protein localises to the cytoplasm. The enzyme catalyses tRNA(Glu) + L-glutamate + ATP = L-glutamyl-tRNA(Glu) + AMP + diphosphate. In terms of biological role, catalyzes the attachment of glutamate to tRNA(Glu) in a two-step reaction: glutamate is first activated by ATP to form Glu-AMP and then transferred to the acceptor end of tRNA(Glu). The polypeptide is Glutamate--tRNA ligase 1 (Acidiphilium cryptum (strain JF-5)).